Here is a 421-residue protein sequence, read N- to C-terminus: Alpha-tubulin N-acetyltransferase 1 (421 aa).

The region spanning 1–190 (MEFPFDVDAL…NNFVIFEGFF (190 aa)) is the N-acetyltransferase domain. At lysine 56 the chain carries N6-acetyllysine; by autocatalysis. Residue 124-137 (FYIHESVQRHGHGR) coordinates acetyl-CoA. Lysine 146 is modified (N6-acetyllysine; by autocatalysis). Residue 160 to 169 (SQKLLKFLNK) coordinates acetyl-CoA. Positions 196–235 (PPAPSLRATRHSRAAAVDPTPAAPARKLPPKRAEGDIKPY) are disordered. Residues 209–221 (AAAVDPTPAAPAR) are compositionally biased toward low complexity. Basic and acidic residues predominate over residues 226–235 (KRAEGDIKPY). N6-acetyllysine; by autocatalysis occurs at positions 233 and 244. Residues 252-284 (PLNRAPRRATPPAHPPPRSSSLGNSPERGPLRP) are disordered. Residues serine 272 and serine 276 each carry the phosphoserine modification. The residue at position 305 (arginine 305) is an Asymmetric dimethylarginine. A disordered region spans residues 306–402 (LLLAADPGGS…PAQSWTVGGD (97 aa)). Serine 315 is modified (phosphoserine). Arginine 323 is subject to Omega-N-methylarginine. Residues 342–354 (VNSSSPNTGNQDS) are compositionally biased toward polar residues. The span at 355-367 (KQGEQETKNRSAS) shows a compositional bias: basic and acidic residues.

This sequence belongs to the acetyltransferase ATAT1 family. Component of the BBSome complex. Interacts with AP2 alpha-adaptins, including AP2A2, but not with AP1 gamma-adaptin (AP1G1/AP1G2); this interaction is required for efficient alpha-tubulin acetylation, hence clathrin-coated pits are sites of microtubule acetylation. Post-translationally, autoacetylation strongly increases tubulin acetylation.

The protein resides in the cytoplasm. Its subcellular location is the membrane. It is found in the clathrin-coated pit. The protein localises to the cell junction. It localises to the focal adhesion. The protein resides in the cell projection. Its subcellular location is the axon. It is found in the cytoskeleton. The protein localises to the spindle. It catalyses the reaction L-lysyl-[alpha-tubulin] + acetyl-CoA = N(6)-acetyl-L-lysyl-[alpha-tubulin] + CoA + H(+). Functionally, specifically acetylates 'Lys-40' in alpha-tubulin on the lumenal side of microtubules. Promotes microtubule destabilization and accelerates microtubule dynamics; this activity may be independent of acetylation activity. Acetylates alpha-tubulin with a slow enzymatic rate, due to a catalytic site that is not optimized for acetyl transfer. Enters the microtubule through each end and diffuses quickly throughout the lumen of microtubules. Acetylates only long/old microtubules because of its slow acetylation rate since it does not have time to act on dynamically unstable microtubules before the enzyme is released. Required for normal sperm flagellar function. Promotes directional cell locomotion and chemotaxis, through AP2A2-dependent acetylation of alpha-tubulin at clathrin-coated pits that are concentrated at the leading edge of migrating cells. May facilitate primary cilium assembly. This chain is Alpha-tubulin N-acetyltransferase 1, found in Homo sapiens (Human).